The chain runs to 410 residues: Arginine deiminase (410 aa).

The Amidino-cysteine intermediate role is filled by Cys400.

This sequence belongs to the arginine deiminase family.

The protein resides in the cytoplasm. It carries out the reaction L-arginine + H2O = L-citrulline + NH4(+). It functions in the pathway amino-acid degradation; L-arginine degradation via ADI pathway; carbamoyl phosphate from L-arginine: step 1/2. This is Arginine deiminase from Levilactobacillus brevis (strain ATCC 367 / BCRC 12310 / CIP 105137 / JCM 1170 / LMG 11437 / NCIMB 947 / NCTC 947) (Lactobacillus brevis).